We begin with the raw amino-acid sequence, 339 residues long: Starvation-sensing protein RspB (339 aa).

Residues C37, H59, C89, C92, C95, C103, and E144 each contribute to the Zn(2+) site.

Belongs to the zinc-containing alcohol dehydrogenase family. Zn(2+) serves as cofactor.

Functionally, not known; probable catabolic enzyme. The chain is Starvation-sensing protein RspB from Escherichia coli (strain K12).